Here is a 627-residue protein sequence, read N- to C-terminus: MATQEFQAETKRLLDIVINSIYSNKEIFLRELISNASDAIDKLYYKSLTDNSLDFNKDDYYIKITVDKENRQLKISDTGIGMTRQELEDNIGVIARSGSLDFKKANEQEIKDGHDIIGQFGVGFYSAFMVAEEVTIISKAYGSDHAYKWESEGIEGYSVSPTEKESVGTDVILKIKENTDDEDYDQYLDEHRLKSIVKKYSDFIRYPIKMDLTKSKPKDDNEEEYEEYIEEETVNTMVPIWERNKNELTDEDYKNFYRERHYGFDEPITHIHINAEGTISFKAVLFIPERPPFNFYTKEFEKGLELYSNGVLIMNKCPDLLPDYFSFVRGVVDSEDLSLNISREMLQQDKQLKLIAKNIKNKVKKELKNVMENDREKYEEFFESFGTLLKYGIYSEFGQNKETLQDLLLFYSSKENKMVSLDEYISRMGEDQKYIYYATGESVERIDKLPQTEFVKDKGYEVLYLTEDVDEFAIKMMGSYQDVEFKSVSSKDLGLDSEDEETSDEKEKEYKGMFDKMAEILSDKVNTVRASERLKDHPVCLANEGEISIEMEKVLQSMPNNQNVQAEKALEINVNHDVFDKLTEAYEQDEDKFKLYTDLLYNQACLIEGLPIEDPVKYTNNVCKIMS.

The a; substrate-binding stretch occupies residues 1–343 (MATQEFQAET…SEDLSLNISR (343 aa)). The tract at residues 344–553 (EMLQQDKQLK…EGEISIEMEK (210 aa)) is b. The c stretch occupies residues 554-627 (VLQSMPNNQN…YTNNVCKIMS (74 aa)).

This sequence belongs to the heat shock protein 90 family. As to quaternary structure, homodimer.

The protein resides in the cytoplasm. Its function is as follows. Molecular chaperone. Has ATPase activity. The chain is Chaperone protein HtpG from Natranaerobius thermophilus (strain ATCC BAA-1301 / DSM 18059 / JW/NM-WN-LF).